We begin with the raw amino-acid sequence, 1851 residues long: Chitin synthase (1851 aa).

The segment at 1-21 (MQYHQHQHQFPGPGPSHTSVY) is disordered. Over 1–108 (MQYHQHQHQF…KDTLYNGFLQ (108 aa)) the chain is Cytoplasmic. The chain crosses the membrane as a helical span at residues 109 to 129 (VLKMITFVALFVTTLGSSILA). Residues 130 to 168 (KLSLLVMAAGLGQAGHNISICPDKIPESPKNSVLISPKN) lie on the Extracellular side of the membrane. Residue N146 is glycosylated (N-linked (GlcNAc...) asparagine). Residues 169-189 (AAKWAWALLLAICIPELLCFA) traverse the membrane as a helical segment. The Cytoplasmic portion of the chain corresponds to 190–208 (RSLHRSLFRKVRGPSFLQF). The chain crosses the membrane as a helical span at residues 209 to 229 (LLVFTVESVHAFGLGALVFAI). Over 230–234 (MPRGM) the chain is Extracellular. Residues 235 to 255 (VITMLQLGNSLCLIPSLLLPL) traverse the membrane as a helical segment. The Cytoplasmic segment spans residues 256–261 (SRSRSR). A helical transmembrane segment spans residues 262-282 (WLPLLLLLDGSAILAQSSAAI). The Extracellular portion of the chain corresponds to 283–291 (WRGSIPLER). The chain crosses the membrane as a helical span at residues 292–312 (FGFVFLCTSLISIAWWQNFVH). At 313–337 (PHSFLPATRFFAHYAAKLRECRSKT) the chain is on the cytoplasmic side. Residues 338–358 (FVVLSPWKCLIFTFCMFQFVP) traverse the membrane as a helical segment. Over 359–544 (PQIPFRELLQ…ELNQFTTAND (186 aa)) the chain is Extracellular. N385 and N435 each carry an N-linked (GlcNAc...) asparagine glycan. Positions 432–522 (LFRNGTRRPP…DADEQEEEEE (91 aa)) are disordered. Basic and acidic residues predominate over residues 442 to 454 (KKEEVKKNKMDSK). The segment covering 455–465 (KKTKKLKKKKG) has biased composition (basic residues). Positions 466 to 478 (GNNNATSTNSSEK) are enriched in low complexity. 2 N-linked (GlcNAc...) asparagine glycosylation sites follow: N469 and N474. Acidic residues predominate over residues 513–522 (DADEQEEEEE). The helical transmembrane segment at 545-565 (ALWLVFVQAGSVLLCQLCAKF) threads the bilayer. Residues 566 to 573 (ACKVVMQR) are Cytoplasmic-facing. The chain crosses the membrane as a helical span at residues 574 to 594 (VGLALPVVLSIPFGILFLAYS). Residues 595–631 (CRQKATNPCHLSEWMSKELFWQCPTRPFHWQRFFREQ) lie on the Extracellular side of the membrane. Residues 632–652 (PNLLWLCWWLSQCWITIHLWL) traverse the membrane as a helical segment. The Cytoplasmic portion of the chain corresponds to 653 to 1124 (PRQERLAKSE…VSIWYIAYQL (472 aa)). The tract at residues 693–718 (SEDIDTEEEANEGGGEQEDGNSSTHT) is disordered. Residues 696 to 711 (IDTEEEANEGGGEQED) show a composition bias toward acidic residues. Residues 1125 to 1145 (VMLFSSVLGPGTIFLMIVGAI) traverse the membrane as a helical segment. Topologically, residues 1146–1154 (SISFNIDTR) are extracellular. Residues 1155–1175 (LALLIVTTPVLCFCVCCLTCG) form a helical membrane-spanning segment. Over 1176-1179 (TETQ) the chain is Cytoplasmic. Residues 1180-1200 (LLLAQVIGALFAMLMTAVIVG) form a helical membrane-spanning segment. Residues 1201–1209 (TSLQIQKDG) are Extracellular-facing. The chain crosses the membrane as a helical span at residues 1210–1230 (LLSPHSIFLFTVLGSWSFSAL). At 1231-1235 (LHPLE) the chain is on the cytoplasmic side. Residues 1236 to 1256 (FGCLLPCGLYFLAIPCMYMLL) traverse the membrane as a helical segment. The Extracellular segment spans residues 1257-1461 (PVYSLCNLNT…QRGLNELRNT (205 aa)). N-linked (GlcNAc...) asparagine glycosylation occurs at N1274. A coiled-coil region spans residues 1329-1383 (CADETVEVRKLDENFRKIERKLQSLERRTNGQGNNAEEEGKEEEETGKSEQERKE). The interval 1350-1402 (LQSLERRTNGQGNNAEEEGKEEEETGKSEQERKEGREEGKEEEGKMSKRKKEE) is disordered. The segment covering 1364–1373 (AEEEGKEEEE) has biased composition (acidic residues). A compositionally biased stretch (basic and acidic residues) spans 1374–1402 (TGKSEQERKEGREEGKEEEGKMSKRKKEE). The helical transmembrane segment at 1462 to 1482 (CCSAFFMVNIVFIIVVLVLQL) threads the bilayer. Residues 1483 to 1527 (QKDCLHIEWPLGPLVNQTRVQCGGGGGRDFEGEEWIMSRLQLEPM) are Cytoplasmic-facing. A helical transmembrane segment spans residues 1528 to 1548 (GFVFIVFFLIILFIQFLAMLF). The Extracellular segment spans residues 1549–1851 (HRFGTFTHII…FLGTTNKRAK (303 aa)). Positions 1626-1658 (GKRQQNAQIPPRCEKGGNERGEESPTSLPAPPV) are disordered. The span at 1637 to 1648 (RCEKGGNERGEE) shows a compositional bias: basic and acidic residues. N1660 carries N-linked (GlcNAc...) asparagine glycosylation. The disordered stretch occupies residues 1765 to 1851 (HSIFPSSSES…FLGTTNKRAK (87 aa)). Over residues 1781 to 1822 (GGGRGRGREQERDKCLEGKKEKFRQRVEEGPARCHRLEELFG) the composition is skewed to basic and acidic residues. The segment covering 1823–1834 (KSRKGGPQKRGK) has biased composition (basic residues).

Belongs to the chitin synthase family. Class IV subfamily. In terms of processing, may require proteolytic cleavage for activation.

Its subcellular location is the cell membrane. The enzyme catalyses [(1-&gt;4)-N-acetyl-beta-D-glucosaminyl](n) + UDP-N-acetyl-alpha-D-glucosamine = [(1-&gt;4)-N-acetyl-beta-D-glucosaminyl](n+1) + UDP + H(+). Its function is as follows. Required for the synthesis of chitin. This is Chitin synthase from Meloidogyne artiellia (British root-knot nematode).